Here is a 128-residue protein sequence, read N- to C-terminus: Probable 4-amino-4-deoxy-L-arabinose-phosphoundecaprenol flippase subunit ArnF (128 aa).

Residues 1–2 (MG) lie on the Cytoplasmic side of the membrane. Residues 3–23 (LMWGLFSVIIASAAQLSLGFA) traverse the membrane as a helical segment. The Periplasmic segment spans residues 24-35 (ASHLPPMTHLWD). A helical membrane pass occupies residues 36-56 (FIAALLAFGLDARILLLGLLG). The Cytoplasmic segment spans residues 57 to 76 (YLLSVFCWYKTLHKLALSKA). A helical transmembrane segment spans residues 77–97 (YALLSMSYVLVWIASMILPGW). The Periplasmic segment spans residues 98 to 100 (EGT). A helical transmembrane segment spans residues 101-121 (FSLKALLGVACIMSGLMLIFL). Over 122-128 (PTTKQRY) the chain is Cytoplasmic.

It belongs to the ArnF family. In terms of assembly, heterodimer of ArnE and ArnF.

It is found in the cell inner membrane. It functions in the pathway bacterial outer membrane biogenesis; lipopolysaccharide biosynthesis. Its function is as follows. Translocates 4-amino-4-deoxy-L-arabinose-phosphoundecaprenol (alpha-L-Ara4N-phosphoundecaprenol) from the cytoplasmic to the periplasmic side of the inner membrane. The chain is Probable 4-amino-4-deoxy-L-arabinose-phosphoundecaprenol flippase subunit ArnF from Escherichia coli O17:K52:H18 (strain UMN026 / ExPEC).